The sequence spans 259 residues: Deoxyribose-phosphate aldolase (259 aa).

Asp-102 (proton donor/acceptor) is an active-site residue. The active-site Schiff-base intermediate with acetaldehyde is the Lys-167. Residue Lys-201 is the Proton donor/acceptor of the active site.

The protein belongs to the DeoC/FbaB aldolase family. DeoC type 2 subfamily.

Its subcellular location is the cytoplasm. It catalyses the reaction 2-deoxy-D-ribose 5-phosphate = D-glyceraldehyde 3-phosphate + acetaldehyde. The protein operates within carbohydrate degradation; 2-deoxy-D-ribose 1-phosphate degradation; D-glyceraldehyde 3-phosphate and acetaldehyde from 2-deoxy-alpha-D-ribose 1-phosphate: step 2/2. Catalyzes a reversible aldol reaction between acetaldehyde and D-glyceraldehyde 3-phosphate to generate 2-deoxy-D-ribose 5-phosphate. This chain is Deoxyribose-phosphate aldolase, found in Enterobacter sp. (strain 638).